The sequence spans 2172 residues: DExH-box ATP-dependent RNA helicase DExH13 (2172 aa).

The tract at residues Tyr-20–Asp-83 is disordered. A compositionally biased stretch (basic and acidic residues) spans Ser-30–Asn-73. The Helicase ATP-binding 1 domain maps to Gly-515–Leu-698. Ala-528–Thr-535 is a binding site for ATP. The DEIH box motif lies at Asp-640–His-643. The Helicase C-terminal 1 domain maps to Gly-742–Gly-946. The SEC63 1 domain maps to Thr-1007–Pro-1308. A Helicase ATP-binding 2 domain is found at Thr-1361–Phe-1538. An ATP-binding site is contributed by Ala-1374–Thr-1381. Positions Asp-1480 to His-1483 match the DELH box motif. The Helicase C-terminal 2 domain maps to Ala-1575–Val-1772. Residues Pro-1840–Phe-2157 form the SEC63 2 domain.

The protein resides in the nucleus. The enzyme catalyses ATP + H2O = ADP + phosphate + H(+). In terms of biological role, RNA helicase that plays an essential role in pre-mRNA splicing as component of the U5 snRNP and U4/U6-U5 tri-snRNP complexes. Involved in spliceosome assembly, activation and disassembly. This Arabidopsis thaliana (Mouse-ear cress) protein is DExH-box ATP-dependent RNA helicase DExH13.